The sequence spans 337 residues: Glucokinase (337 aa).

Residue Ala-11–Thr-16 participates in ATP binding.

Belongs to the bacterial glucokinase family.

The protein localises to the cytoplasm. The catalysed reaction is D-glucose + ATP = D-glucose 6-phosphate + ADP + H(+). This is Glucokinase from Xylella fastidiosa (strain 9a5c).